The following is a 477-amino-acid chain: Glutamyl-tRNA(Gln) amidotransferase subunit A (477 aa).

Active-site charge relay system residues include lysine 71 and serine 146. The active-site Acyl-ester intermediate is serine 170.

It belongs to the amidase family. GatA subfamily. Heterotrimer of A, B and C subunits.

The catalysed reaction is L-glutamyl-tRNA(Gln) + L-glutamine + ATP + H2O = L-glutaminyl-tRNA(Gln) + L-glutamate + ADP + phosphate + H(+). In terms of biological role, allows the formation of correctly charged Gln-tRNA(Gln) through the transamidation of misacylated Glu-tRNA(Gln) in organisms which lack glutaminyl-tRNA synthetase. The reaction takes place in the presence of glutamine and ATP through an activated gamma-phospho-Glu-tRNA(Gln). In Halothermothrix orenii (strain H 168 / OCM 544 / DSM 9562), this protein is Glutamyl-tRNA(Gln) amidotransferase subunit A.